The primary structure comprises 712 residues: Elongation factor G (712 aa).

A tr-type G domain is found at 8–290 (TRYRNIGISA…AVIEFLPSPT (283 aa)). Residues 17-24 (AHIDAGKT), 88-92 (DTPGH), and 142-145 (NKMD) each bind GTP.

It belongs to the TRAFAC class translation factor GTPase superfamily. Classic translation factor GTPase family. EF-G/EF-2 subfamily.

Its subcellular location is the cytoplasm. Catalyzes the GTP-dependent ribosomal translocation step during translation elongation. During this step, the ribosome changes from the pre-translocational (PRE) to the post-translocational (POST) state as the newly formed A-site-bound peptidyl-tRNA and P-site-bound deacylated tRNA move to the P and E sites, respectively. Catalyzes the coordinated movement of the two tRNA molecules, the mRNA and conformational changes in the ribosome. The polypeptide is Elongation factor G (Acinetobacter baumannii (strain AB0057)).